Here is a 145-residue protein sequence, read N- to C-terminus: CBS domain-containing protein DDB_G0289609 (145 aa).

CBS domains follow at residues 9–66 and 84–141; these read MSKS…FLPE and MKQN…LEPV.

The protein is CBS domain-containing protein DDB_G0289609 of Dictyostelium discoideum (Social amoeba).